We begin with the raw amino-acid sequence, 320 residues long: Myoblast determination protein 1 (320 aa).

Residue Met-1 forms a Peptide (Met-Gly) (interchain with G-Cter in ubiquitin) linkage. Lys-104 carries the N6-methyllysine; by EHMT2 modification. The 52-residue stretch at 109-160 (DRRKAATMRERRRLSKVNEAFETLKRCTSSNPNQRLPKVEILRNAIRYIEGL) folds into the bHLH domain. Disordered regions lie at residues 174–219 (AAAA…PPSG) and 262–320 (ESPA…YQVL). 2 stretches are compositionally biased toward polar residues: residues 197-207 (SDASSPRSNCS) and 291-301 (GESSGDPTQSP).

Efficient DNA binding requires dimerization with another bHLH protein. Seems to form active heterodimers with ITF-2. Interacts with SUV39H1. Interacts with DDX5. Interacts with CHD2. Interacts with TSC22D3. Interacts with SETD3. Interacts with P-TEFB complex; promotes the transcriptional activity of MYOD1 through its CDK9-mediated phosphorylation. Interacts with CSRP3. Interacts with NUPR1. Post-translationally, phosphorylated by CDK9. This phosphorylation promotes its function in muscle differentiation. Acetylated by a complex containing EP300 and PCAF. The acetylation is essential to activate target genes. Conversely, its deacetylation by SIRT1 inhibits its function. In terms of processing, ubiquitinated on the N-terminus; which is required for proteasomal degradation. Post-translationally, methylation at Lys-104 by EHMT2/G9a inhibits myogenic activity.

The protein localises to the nucleus. Its function is as follows. Acts as a transcriptional activator that promotes transcription of muscle-specific target genes and plays a role in muscle differentiation. Together with MYF5 and MYOG, co-occupies muscle-specific gene promoter core region during myogenesis. Induces fibroblasts to differentiate into myoblasts. Interacts with and is inhibited by the twist protein. This interaction probably involves the basic domains of both proteins. The polypeptide is Myoblast determination protein 1 (MYOD1) (Homo sapiens (Human)).